The sequence spans 505 residues: Probable bifunctional methylthioribulose-1-phosphate dehydratase/enolase-phosphatase E1 (505 aa).

The tract at residues 1-237 (MGLDKDGISN…ALKLHQLGLD (237 aa)) is methylthioribulose-1-phosphate dehydratase. Cysteine 109 is a binding site for substrate. Zn(2+)-binding residues include histidine 127 and histidine 129. The active-site Proton donor/acceptor; for methylthioribulose-1-phosphate dehydratase activity is the glutamate 152. Histidine 202 contributes to the Zn(2+) binding site. The segment at 266-505 (FVLDIEGTTT…FRTAKSLLEL (240 aa)) is enolase-phosphatase E1. Residues aspartate 269 and glutamate 271 each coordinate Mg(2+). Substrate contacts are provided by residues 404–405 (SS) and lysine 438. Residue aspartate 464 coordinates Mg(2+).

The protein in the N-terminal section; belongs to the aldolase class II family. MtnB subfamily. It in the C-terminal section; belongs to the HAD-like hydrolase superfamily. MasA/MtnC family. Zn(2+) serves as cofactor. It depends on Mg(2+) as a cofactor.

The catalysed reaction is 5-(methylsulfanyl)-D-ribulose 1-phosphate = 5-methylsulfanyl-2,3-dioxopentyl phosphate + H2O. The enzyme catalyses 5-methylsulfanyl-2,3-dioxopentyl phosphate + H2O = 1,2-dihydroxy-5-(methylsulfanyl)pent-1-en-3-one + phosphate. The protein operates within amino-acid biosynthesis; L-methionine biosynthesis via salvage pathway; L-methionine from S-methyl-5-thio-alpha-D-ribose 1-phosphate: step 2/6. It functions in the pathway amino-acid biosynthesis; L-methionine biosynthesis via salvage pathway; L-methionine from S-methyl-5-thio-alpha-D-ribose 1-phosphate: step 3/6. It participates in amino-acid biosynthesis; L-methionine biosynthesis via salvage pathway; L-methionine from S-methyl-5-thio-alpha-D-ribose 1-phosphate: step 4/6. The chain is Probable bifunctional methylthioribulose-1-phosphate dehydratase/enolase-phosphatase E1 from Physcomitrium patens (Spreading-leaved earth moss).